Consider the following 196-residue polypeptide: Peptidoglycan recognition protein (196 aa).

Positions 1 to 23 (MARLHSAVVLALALSSLLTEIAA) are cleaved as a signal peptide. Disulfide bonds link Cys25–Cys147 and Cys61–Cys67. The 128-residue stretch at 46–173 (RPVSLVIVQH…RQLIASESPG (128 aa)) folds into the N-acetylmuramoyl-L-alanine amidase domain.

The protein belongs to the N-acetylmuramoyl-L-alanine amidase 2 family. As to quaternary structure, monomer. Constitutively expressed in fat body, epithelial cells and hemocytes. Not detected in Malpighian tubules, silk gland or midgut.

Binds specifically to peptidoglycan and triggers the propenoloxidase cascade which is an important insect defense mechanism. This chain is Peptidoglycan recognition protein, found in Bombyx mori (Silk moth).